The sequence spans 143 residues: Small ribosomal subunit protein uS12 (143 aa).

Basic residues predominate over residues 1–19 (MGKPKGIRAARKLKTHRQA). The interval 1-21 (MGKPKGIRAARKLKTHRQAQR) is disordered. Pro62 is modified (hydroxyproline).

The protein belongs to the universal ribosomal protein uS12 family. In terms of assembly, component of the 40S small ribosomal subunit.

It localises to the cytoplasm. Its subcellular location is the cytosol. The protein resides in the rough endoplasmic reticulum. This Brugia malayi (Filarial nematode worm) protein is Small ribosomal subunit protein uS12 (rps-23).